Here is a 287-residue protein sequence, read N- to C-terminus: Bifunctional protein FolD (287 aa).

NADP(+) is bound by residues 166 to 168 (GAS) and Ile232.

This sequence belongs to the tetrahydrofolate dehydrogenase/cyclohydrolase family. As to quaternary structure, homodimer.

The enzyme catalyses (6R)-5,10-methylene-5,6,7,8-tetrahydrofolate + NADP(+) = (6R)-5,10-methenyltetrahydrofolate + NADPH. It catalyses the reaction (6R)-5,10-methenyltetrahydrofolate + H2O = (6R)-10-formyltetrahydrofolate + H(+). The protein operates within one-carbon metabolism; tetrahydrofolate interconversion. Catalyzes the oxidation of 5,10-methylenetetrahydrofolate to 5,10-methenyltetrahydrofolate and then the hydrolysis of 5,10-methenyltetrahydrofolate to 10-formyltetrahydrofolate. This chain is Bifunctional protein FolD, found in Buchnera aphidicola subsp. Baizongia pistaciae (strain Bp).